We begin with the raw amino-acid sequence, 211 residues long: Beta-crystallin B3 (211 aa).

Met1 carries the N-acetylmethionine modification. An N-acetylalanine; in Beta-crystallin B3, N-terminally processed modification is found at Ala2. Residues 2–23 (AEQHGAPEQAAAGKSHGDLGGS) are N-terminal arm. 2 consecutive Beta/gamma crystallin 'Greek key' domains span residues 24 to 63 (YKVI…QVES) and 64 to 108 (GPWL…RPLN). The segment at 109 to 113 (IDSPH) is connecting peptide. 2 consecutive Beta/gamma crystallin 'Greek key' domains span residues 114-155 (HKLH…RAIN) and 156-198 (GTWV…RRIR). The C-terminal arm stretch occupies residues 200 to 211 (QKWHKRGRFPSS).

It belongs to the beta/gamma-crystallin family. In terms of assembly, homo/heterodimer, or complexes of higher-order. The structure of beta-crystallin oligomers seems to be stabilized through interactions between the N-terminal arms.

In terms of biological role, crystallins are the dominant structural components of the vertebrate eye lens. This chain is Beta-crystallin B3 (CRYBB3), found in Homo sapiens (Human).